A 283-amino-acid chain; its full sequence is Phosphatidylserine decarboxylase proenzyme (283 aa).

Residues aspartate 88, histidine 145, and serine 248 each act as charge relay system; for autoendoproteolytic cleavage activity in the active site. Serine 248 functions as the Schiff-base intermediate with substrate; via pyruvic acid; for decarboxylase activity in the catalytic mechanism. Residue serine 248 is modified to Pyruvic acid (Ser); by autocatalysis.

Belongs to the phosphatidylserine decarboxylase family. PSD-B subfamily. Prokaryotic type I sub-subfamily. Heterodimer of a large membrane-associated beta subunit and a small pyruvoyl-containing alpha subunit. Pyruvate is required as a cofactor. In terms of processing, is synthesized initially as an inactive proenzyme. Formation of the active enzyme involves a self-maturation process in which the active site pyruvoyl group is generated from an internal serine residue via an autocatalytic post-translational modification. Two non-identical subunits are generated from the proenzyme in this reaction, and the pyruvate is formed at the N-terminus of the alpha chain, which is derived from the carboxyl end of the proenzyme. The autoendoproteolytic cleavage occurs by a canonical serine protease mechanism, in which the side chain hydroxyl group of the serine supplies its oxygen atom to form the C-terminus of the beta chain, while the remainder of the serine residue undergoes an oxidative deamination to produce ammonia and the pyruvoyl prosthetic group on the alpha chain. During this reaction, the Ser that is part of the protease active site of the proenzyme becomes the pyruvoyl prosthetic group, which constitutes an essential element of the active site of the mature decarboxylase.

It localises to the cell membrane. The catalysed reaction is a 1,2-diacyl-sn-glycero-3-phospho-L-serine + H(+) = a 1,2-diacyl-sn-glycero-3-phosphoethanolamine + CO2. The protein operates within phospholipid metabolism; phosphatidylethanolamine biosynthesis; phosphatidylethanolamine from CDP-diacylglycerol: step 2/2. Catalyzes the formation of phosphatidylethanolamine (PtdEtn) from phosphatidylserine (PtdSer). This Methylibium petroleiphilum (strain ATCC BAA-1232 / LMG 22953 / PM1) protein is Phosphatidylserine decarboxylase proenzyme.